The chain runs to 144 residues: Transcriptional regulator SlyA (144 aa).

The region spanning 2 to 135 is the HTH marR-type domain; the sequence is ESSLGSDLAR…LNNIIAKLER (134 aa). The H-T-H motif DNA-binding region spans 49–72; the sequence is QIQLAKAIGIEQPSLVRTLDQLES.

It belongs to the SlyA family. In terms of assembly, homodimer.

Its function is as follows. Transcription regulator that can specifically activate or repress expression of target genes. The chain is Transcriptional regulator SlyA from Blochmanniella floridana.